The primary structure comprises 955 residues: Kinesin-like protein K39 (955 aa).

Positions 12 to 392 (RVKVSVRVRP…LRYASRARDI (381 aa)) constitute a Kinesin motor domain. 122–129 (GQTGSGKT) provides a ligand contact to ATP. Residues 426-955 (PAYVSELKKK…EERAAELASQ (530 aa)) adopt a coiled-coil conformation. Disordered stretches follow at residues 682 to 712 (ELDA…RESE) and 725 to 955 (TAAA…LASQ). 7 repeat units span residues 704 to 742 (LEQQ…TRAT), 743 to 781 (LEQQ…TRAT), 782 to 820 (LEQQ…TRAT), 821 to 859 (LEQQ…TRAT), 860 to 898 (LEQQ…TRAT), 899 to 937 (LEQQ…TRAA), and 938 to 955 (LEQQ…LASQ). The segment at 704–955 (LEQQLRESEE…EERAAELASQ (252 aa)) is 7 X 39 AA approximate tandem repeats. Basic and acidic residues-rich tracts occupy residues 785 to 794 (QLRDSEERAA), 824 to 833 (QLRDSEERAA), 863 to 872 (QLRESEERAA), 902 to 911 (QLRDSEERAA), and 941 to 955 (QLRD…LASQ).

Belongs to the TRAFAC class myosin-kinesin ATPase superfamily. Kinesin family.

It is found in the cytoplasm. It localises to the cytoskeleton. The chain is Kinesin-like protein K39 (KIN) from Leishmania chagasi.